Here is a 132-residue protein sequence, read N- to C-terminus: MSMSDPIADFLTRIRNANMAHHDSVEAPASKMKKDIAEILKQEGFIRDVEYVEDNKQGIIRVFLKYGQDGERVISGLKRISKPGLRSYVKADAVPKVLNGLGIAIISTSNGVVTDKVARAKKVGGEVVAYIW.

Belongs to the universal ribosomal protein uS8 family. As to quaternary structure, part of the 30S ribosomal subunit. Contacts proteins S5 and S12.

One of the primary rRNA binding proteins, it binds directly to 16S rRNA central domain where it helps coordinate assembly of the platform of the 30S subunit. The sequence is that of Small ribosomal subunit protein uS8 from Limosilactobacillus fermentum (strain NBRC 3956 / LMG 18251) (Lactobacillus fermentum).